We begin with the raw amino-acid sequence, 423 residues long: Glutamate-1-semialdehyde 2,1-aminomutase (423 aa).

At Lys259 the chain carries N6-(pyridoxal phosphate)lysine.

Belongs to the class-III pyridoxal-phosphate-dependent aminotransferase family. HemL subfamily. As to quaternary structure, homodimer. Pyridoxal 5'-phosphate serves as cofactor.

Its subcellular location is the cytoplasm. The catalysed reaction is (S)-4-amino-5-oxopentanoate = 5-aminolevulinate. It participates in porphyrin-containing compound metabolism; protoporphyrin-IX biosynthesis; 5-aminolevulinate from L-glutamyl-tRNA(Glu): step 2/2. In Thermosipho africanus (strain TCF52B), this protein is Glutamate-1-semialdehyde 2,1-aminomutase.